The primary structure comprises 358 residues: Mannonate dehydratase (358 aa).

The protein belongs to the mannonate dehydratase family. Fe(2+) serves as cofactor. The cofactor is Mn(2+).

It carries out the reaction D-mannonate = 2-dehydro-3-deoxy-D-gluconate + H2O. It functions in the pathway carbohydrate metabolism; pentose and glucuronate interconversion. Catalyzes the dehydration of D-mannonate. This is Mannonate dehydratase from Shouchella clausii (strain KSM-K16) (Alkalihalobacillus clausii).